The following is a 713-amino-acid chain: Polyribonucleotide nucleotidyltransferase (713 aa).

Asp494 and Asp500 together coordinate Mg(2+). Positions Pro561 to Val623 constitute a KH domain. An S1 motif domain is found at Gly633 to Lys702.

This sequence belongs to the polyribonucleotide nucleotidyltransferase family. The cofactor is Mg(2+).

The protein resides in the cytoplasm. The catalysed reaction is RNA(n+1) + phosphate = RNA(n) + a ribonucleoside 5'-diphosphate. Its function is as follows. Involved in mRNA degradation. Catalyzes the phosphorolysis of single-stranded polyribonucleotides processively in the 3'- to 5'-direction. The polypeptide is Polyribonucleotide nucleotidyltransferase (Amoebophilus asiaticus (strain 5a2)).